A 542-amino-acid chain; its full sequence is Chaperonin GroEL (542 aa).

Residues 29-32, K50, 86-90, G414, and D494 each bind ATP; these read TLGP and DGTTT.

The protein belongs to the chaperonin (HSP60) family. Forms a cylinder of 14 subunits composed of two heptameric rings stacked back-to-back. Interacts with the co-chaperonin GroES.

It is found in the cytoplasm. It catalyses the reaction ATP + H2O + a folded polypeptide = ADP + phosphate + an unfolded polypeptide.. Its function is as follows. Together with its co-chaperonin GroES, plays an essential role in assisting protein folding. The GroEL-GroES system forms a nano-cage that allows encapsulation of the non-native substrate proteins and provides a physical environment optimized to promote and accelerate protein folding. The chain is Chaperonin GroEL from Cytophaga hutchinsonii (strain ATCC 33406 / DSM 1761 / CIP 103989 / NBRC 15051 / NCIMB 9469 / D465).